Reading from the N-terminus, the 262-residue chain is Ribosomal RNA small subunit methyltransferase A (262 aa).

S-adenosyl-L-methionine contacts are provided by H13, L15, G40, E61, D85, and N103.

It belongs to the class I-like SAM-binding methyltransferase superfamily. rRNA adenine N(6)-methyltransferase family. RsmA subfamily.

It is found in the cytoplasm. The catalysed reaction is adenosine(1518)/adenosine(1519) in 16S rRNA + 4 S-adenosyl-L-methionine = N(6)-dimethyladenosine(1518)/N(6)-dimethyladenosine(1519) in 16S rRNA + 4 S-adenosyl-L-homocysteine + 4 H(+). Functionally, specifically dimethylates two adjacent adenosines (A1518 and A1519) in the loop of a conserved hairpin near the 3'-end of 16S rRNA in the 30S particle. May play a critical role in biogenesis of 30S subunits. This chain is Ribosomal RNA small subunit methyltransferase A, found in Bordetella avium (strain 197N).